Here is a 434-residue protein sequence, read N- to C-terminus: N-acylneuraminate cytidylyltransferase (434 aa).

Met-1 is modified (N-acetylmethionine). The interval 1–42 is disordered; sequence MDSVEKGAATSVSNPRGRPSRGRPPKLQRNSRGGQGRGVEKP. Positions 15 to 31 match the BC1 motif motif; the sequence is PRGRPSRGRPPKLQRNS. Arg-37 and Arg-52 each carry omega-N-methylarginine. The substrate site is built by Arg-52, Asn-62, Arg-111, Ser-120, Ser-122, and Gln-143. Residues 200–206 carry the BC2 motif motif; that stretch reads KRPRRQD. Arg-201 is an active-site residue. A BC3 motif motif is present at residues 269-276; it reads KEKLKEIK.

The protein belongs to the CMP-NeuNAc synthase family. As to quaternary structure, homotetramer; the active enzyme is formed by a dimer of dimers.

It is found in the nucleus. It catalyses the reaction an N-acylneuraminate + CTP = a CMP-N-acyl-beta-neuraminate + diphosphate. It functions in the pathway amino-sugar metabolism; N-acetylneuraminate metabolism. Its function is as follows. Catalyzes the activation of N-acetylneuraminic acid (NeuNAc) to cytidine 5'-monophosphate N-acetylneuraminic acid (CMP-NeuNAc), a substrate required for the addition of sialic acid. Has some activity toward NeuNAc, N-glycolylneuraminic acid (Neu5Gc) or 2-keto-3-deoxy-D-glycero-D-galacto-nononic acid (KDN). The chain is N-acylneuraminate cytidylyltransferase (CMAS) from Bos taurus (Bovine).